Reading from the N-terminus, the 345-residue chain is Phenylalanine--tRNA ligase alpha subunit (345 aa).

Glutamate 253 is a Mg(2+) binding site.

It belongs to the class-II aminoacyl-tRNA synthetase family. Phe-tRNA synthetase alpha subunit type 1 subfamily. As to quaternary structure, tetramer of two alpha and two beta subunits. It depends on Mg(2+) as a cofactor.

It localises to the cytoplasm. It carries out the reaction tRNA(Phe) + L-phenylalanine + ATP = L-phenylalanyl-tRNA(Phe) + AMP + diphosphate + H(+). The sequence is that of Phenylalanine--tRNA ligase alpha subunit from Lawsonia intracellularis (strain PHE/MN1-00).